The primary structure comprises 101 residues: Chaperone modulatory protein CbpM (101 aa).

This sequence belongs to the CbpM family.

Functionally, interacts with CbpA and inhibits both the DnaJ-like co-chaperone activity and the DNA binding activity of CbpA. Together with CbpA, modulates the activity of the DnaK chaperone system. Does not inhibit the co-chaperone activity of DnaJ. This chain is Chaperone modulatory protein CbpM, found in Salmonella paratyphi A (strain ATCC 9150 / SARB42).